Here is a 702-residue protein sequence, read N- to C-terminus: ATP-dependent RNA helicase DDX4 (702 aa).

Positions 22–228 (FEKDKYSSGA…YIPPPPPEDE (207 aa)) are disordered. The span at 29 to 46 (SGANGDTFNRTSASSDIG) shows a compositional bias: polar residues. Gly residues-rich tracts occupy residues 58–68 (GGFGRGKGFGN) and 125–137 (RGSF…GFGL). Composition is skewed to polar residues over residues 141–150 (NSESDQDQGT) and 195–215 (SGKN…SQGP). 2 positions are modified to phosphoserine: serine 195 and serine 199. Positions 201–220 (KSETEGGESSDSQGPKVTYI) are interaction with RANBP9. Positions 261–289 (LTFEEANLCQTLNNNIAKAGYTKLTPVQK) match the Q motif motif. Residues 292–475 (IPIVLAGRDL…GDFLKSSYLF (184 aa)) enclose the Helicase ATP-binding domain. 305–312 (AQTGSGKT) lines the ATP pocket. The short motif at 419–422 (DEAD) is the DEAD box element. The Helicase C-terminal domain maps to 503–648 (KLVEILRNIG…DVPAWLEEIA (146 aa)). Over residues 681–693 (TLNTAGISSSQAP) the composition is skewed to polar residues. Residues 681–702 (TLNTAGISSSQAPNPVDDESWD) are disordered. Phosphoserine is present on serine 700.

The protein belongs to the DEAD box helicase family. DDX4/VASA subfamily. As to quaternary structure, found in a mRNP complex, at least composed of TDRD1, TDRD6, TDRD7 and DDX4. Interacts with RANBP9. Interacts with RANBP10. Interacts with PIWIL2 and MAEL. Interacts with BMAL1 and CLOCK. Interacts with Tex19.1 and, probably, Tex19.2. Interacts with RBM46. In terms of tissue distribution, testis-specific.

It localises to the cytoplasm. The protein resides in the perinuclear region. It catalyses the reaction ATP + H2O = ADP + phosphate + H(+). ATP-dependent RNA helicase required during spermatogenesis to repress transposable elements and preventing their mobilization, which is essential for the germline integrity. Acts via the piRNA metabolic process, which mediates the repression of transposable elements during meiosis by forming complexes composed of piRNAs and Piwi proteins and governs the methylation and subsequent repression of transposons. Involved in the secondary piRNAs metabolic process, the production of piRNAs in fetal male germ cells through a ping-pong amplification cycle. Required for PIWIL2 slicing-triggered piRNA biogenesis: helicase activity enables utilization of one of the slice cleavage fragments generated by PIWIL2 and processing these pre-piRNAs into piRNAs. The protein is ATP-dependent RNA helicase DDX4 of Mus musculus (Mouse).